The chain runs to 103 residues: Histone H4 (103 aa).

Over residues 1-14 (MSGRGKGGKGLGKG) the composition is skewed to gly residues. The interval 1–20 (MSGRGKGGKGLGKGGAKRHR) is disordered. Ser-2 carries the N-acetylserine modification. At Lys-17 the chain carries N6-acetyllysine. Residues 17-21 (KRHRK) mediate DNA binding. Lys-21 carries the N6-methyllysine modification.

It belongs to the histone H4 family. As to quaternary structure, the nucleosome is a histone octamer containing two molecules each of H2A, H2B, H3 and H4 assembled in one H3-H4 heterotetramer and two H2A-H2B heterodimers. The octamer wraps approximately 147 bp of DNA.

It is found in the nucleus. It localises to the chromosome. Functionally, core component of nucleosome. Nucleosomes wrap and compact DNA into chromatin, limiting DNA accessibility to the cellular machineries which require DNA as a template. Histones thereby play a central role in transcription regulation, DNA repair, DNA replication and chromosomal stability. DNA accessibility is regulated via a complex set of post-translational modifications of histones, also called histone code, and nucleosome remodeling. This is Histone H4 from Eucalyptus globulus (Tasmanian blue gum).